A 354-amino-acid polypeptide reads, in one-letter code: Ephrin-4 (354 aa).

The first 22 residues, 1–22 (MKRPLDFLLAICLILLRSSTFA), serve as a signal peptide directing secretion. Residues 23-173 (DEHTVHWNST…SKNMRLSMKV (151 aa)) form the Ephrin RBD domain. A glycan (N-linked (GlcNAc...) asparagine) is linked at Asn30. 2 disulfides stabilise this stretch: Cys55–Cys92 and Cys80–Cys162. The segment at 173–196 (VLSSQPTPSPSSKPARSRTDARRQ) is disordered. Residues 175–186 (SSQPTPSPSSKP) show a composition bias toward low complexity. Residue Ser335 is the site of GPI-anchor amidated serine attachment. A propeptide spans 336–354 (SSSLPTFLIVFLIAVNLLF) (removed in mature form).

Belongs to the ephrin family. Post-translationally, may undergo proteolysis by metalloprotease sup-17 to give rise to a soluble form.

It localises to the cell membrane. Regulates the formation or stabilization of cell-cell contacts at several stages of epithelial morphogenesis. In early embryonic development, involved in ventral closure of the epidermis. During male tail morphogenesis, regulates precursor cell sorting together with mab-20 and allows the formation of distinct sensory rays. Probably acts as a ligand for lad-2 to regulate axon guidance of several neurons including SDQL, SDQR, SMD and PLN neurons during neurogenesis. The protein is Ephrin-4 (efn-4) of Caenorhabditis briggsae.